Reading from the N-terminus, the 403-residue chain is Prostaglandin E2 receptor EP1 subtype (403 aa).

The Extracellular segment spans residues 1–38 (MSLCGPLNLSLAGEATPCAEPGAPNASAWPPSGRASAS). Residues N8 and N25 are each glycosylated (N-linked (GlcNAc...) asparagine). A helical membrane pass occupies residues 39 to 65 (PALPIFSMTLGAVSNVLALALLAQAAG). Over 66 to 75 (RLRRRRSAAT) the chain is Cytoplasmic. A helical membrane pass occupies residues 76-99 (FLLFVASLLATDLAGHVIPGALVL). Residues 100 to 114 (RLYAAGRSPAGGACH) lie on the Extracellular side of the membrane. C113 and C191 are disulfide-bonded. A helical membrane pass occupies residues 115–136 (FLGGCMVFFGLCPLLLGCGMAV). Over 137-158 (ERCVGVTRPLLHAARVSAARAR) the chain is Cytoplasmic. Residues 159 to 180 (LALAVLAALALAVALLPLARVG) form a helical membrane-spanning segment. Residues 181–204 (RYELQYPGTWCFIGLRPAGGWRQA) lie on the Extracellular side of the membrane. Residues 205–230 (LLAGLFAGLGLAALLAALVCNTLSGL) traverse the membrane as a helical segment. Residues 231–295 (ALLRARWRRR…ARRARAHDVE (65 aa)) lie on the Cytoplasmic side of the membrane. Residues 243-287 (RRRPQACGPDGRRHWGARAPRSASASSSSSVASVPGGSPGRGSAR) are disordered. Positions 259–278 (ARAPRSASASSSSSVASVPG) are enriched in low complexity. The chain crosses the membrane as a helical span at residues 296-322 (MVGQLVGIMVVSCICWSPLLVLVVLAV). Residues 323–333 (GGWGSSSLQRP) are Extracellular-facing. The chain crosses the membrane as a helical span at residues 334 to 355 (LFLAVRLASWNQILDPWVYILL). Residues 356 to 403 (RQAVLRQLLRLLPPRPGAKGSPAGLALTRSAWEASSLRSSRHSSLSHL) are Cytoplasmic-facing.

Belongs to the G-protein coupled receptor 1 family.

Its subcellular location is the cell membrane. In terms of biological role, receptor for prostaglandin E2 (PGE2). The activity of this receptor is mediated by G(q) proteins which activate a phosphatidylinositol-calcium second messenger system. May play a role as an important modulator of renal function. Implicated the smooth muscle contractile response to PGE2 in various tissues. In Canis lupus familiaris (Dog), this protein is Prostaglandin E2 receptor EP1 subtype (PTGER1).